Consider the following 413-residue polypeptide: Gamma-glutamyl phosphate reductase (413 aa).

This sequence belongs to the gamma-glutamyl phosphate reductase family.

Its subcellular location is the cytoplasm. It catalyses the reaction L-glutamate 5-semialdehyde + phosphate + NADP(+) = L-glutamyl 5-phosphate + NADPH + H(+). Its pathway is amino-acid biosynthesis; L-proline biosynthesis; L-glutamate 5-semialdehyde from L-glutamate: step 2/2. Functionally, catalyzes the NADPH-dependent reduction of L-glutamate 5-phosphate into L-glutamate 5-semialdehyde and phosphate. The product spontaneously undergoes cyclization to form 1-pyrroline-5-carboxylate. This chain is Gamma-glutamyl phosphate reductase, found in Salinispora arenicola (strain CNS-205).